Consider the following 325-residue polypeptide: Acetyl-coenzyme A carboxylase carboxyl transferase subunit alpha (325 aa).

Residues 38–292 (RLEERLSKLQ…DGILKETLKS (255 aa)) form the CoA carboxyltransferase C-terminal domain.

It belongs to the AccA family. Acetyl-CoA carboxylase is a heterohexamer composed of biotin carboxyl carrier protein (AccB), biotin carboxylase (AccC) and two subunits each of ACCase subunit alpha (AccA) and ACCase subunit beta (AccD).

Its subcellular location is the cytoplasm. It carries out the reaction N(6)-carboxybiotinyl-L-lysyl-[protein] + acetyl-CoA = N(6)-biotinyl-L-lysyl-[protein] + malonyl-CoA. Its pathway is lipid metabolism; malonyl-CoA biosynthesis; malonyl-CoA from acetyl-CoA: step 1/1. Its function is as follows. Component of the acetyl coenzyme A carboxylase (ACC) complex. First, biotin carboxylase catalyzes the carboxylation of biotin on its carrier protein (BCCP) and then the CO(2) group is transferred by the carboxyltransferase to acetyl-CoA to form malonyl-CoA. This Bacillus velezensis (strain DSM 23117 / BGSC 10A6 / LMG 26770 / FZB42) (Bacillus amyloliquefaciens subsp. plantarum) protein is Acetyl-coenzyme A carboxylase carboxyl transferase subunit alpha.